Consider the following 82-residue polypeptide: uncharacterized protein (82 aa).

The Resolvase/invertase-type recombinase catalytic domain maps to 11 to 82; the sequence is NVGIYVRVST…HIEQGIMTHC (72 aa). The active-site O-(5'-phospho-DNA)-serine intermediate is the S19.

The protein belongs to the site-specific recombinase resolvase family.

This is an uncharacterized protein from Bacillus phage phi105 (Bacteriophage phi-105).